The sequence spans 431 residues: RNA-binding motif, single-stranded-interacting protein 3 (431 aa).

A disordered region spans residues 28–53 (YAPAPHPMAPPSPSTNSSSNSSGEQL). Over residues 31-40 (APHPMAPPSP) the composition is skewed to pro residues. RRM domains lie at 56-129 (TNLY…MAKQ) and 135-220 (TNLY…FADG). Disordered stretches follow at residues 220-242 (GGQK…PREG) and 393-431 (TSPQ…QSKP). A compositionally biased stretch (low complexity) spans 401–411 (SSQDSSGQQQQ).

The protein localises to the cytoplasm. Its function is as follows. Binds poly(A) and poly(U) oligoribonucleotides. The protein is RNA-binding motif, single-stranded-interacting protein 3 (Rbms3) of Mus musculus (Mouse).